Here is a 399-residue protein sequence, read N- to C-terminus: Enoyl-[acyl-carrier-protein] reductase [NADH] (399 aa).

Residues 48 to 53, 74 to 75, 111 to 112, and 139 to 140 contribute to the NAD(+) site; these read GASTGY, FE, DA, and LA. Residue tyrosine 225 coordinates substrate. Tyrosine 235 functions as the Proton donor in the catalytic mechanism. Residues lysine 244 and 273-275 contribute to the NAD(+) site; that span reads VVT.

It belongs to the TER reductase family. As to quaternary structure, monomer.

The enzyme catalyses a 2,3-saturated acyl-[ACP] + NAD(+) = a (2E)-enoyl-[ACP] + NADH + H(+). Its pathway is lipid metabolism; fatty acid biosynthesis. Involved in the final reduction of the elongation cycle of fatty acid synthesis (FAS II). Catalyzes the reduction of a carbon-carbon double bond in an enoyl moiety that is covalently linked to an acyl carrier protein (ACP). The chain is Enoyl-[acyl-carrier-protein] reductase [NADH] from Serratia proteamaculans (strain 568).